The primary structure comprises 2077 residues: Large tegument protein deneddylase (2077 aa).

The tract at residues 1 to 231 is deubiquitination activity; sequence MKIITSSTNQ…PDIAIALDKF (231 aa). A Peptidase C76 domain is found at 3–221; it reads IITSSTNQND…ELLILKTYKD (219 aa). Catalysis depends on residues cysteine 23, aspartate 156, and histidine 158. A region of interest (interaction with inner tegument protein) is located at residue serine 287. The tract at residues 1982-2004 is disordered; the sequence is PPNNTESTRPGKQTSETLTNKNL.

Belongs to the herpesviridae large tegument protein family. In terms of assembly, interacts with host CUL1 and CUL4A; these interactions inhibit the E3 ligase activity of cullins. Interacts with inner tegument protein. Interacts with capsid vertex specific component CVC2. Interacts with the major capsid protein/MCP.

Its subcellular location is the virion tegument. The protein localises to the host cytoplasm. It is found in the host nucleus. It carries out the reaction Thiol-dependent hydrolysis of ester, thioester, amide, peptide and isopeptide bonds formed by the C-terminal Gly of ubiquitin (a 76-residue protein attached to proteins as an intracellular targeting signal).. Large tegument protein that plays multiple roles in the viral cycle. During viral entry, remains associated with the capsid while most of the tegument is detached and participates in the capsid transport toward the host nucleus. Plays a role in the routing of the capsid at the nuclear pore complex and subsequent uncoating. Within the host nucleus, acts as a deneddylase and promotes the degradation of nuclear CRLs (cullin-RING ubiquitin ligases) and thereby stabilizes nuclear CRL substrates, while cytoplasmic CRLs remain unaffected. These modifications prevent host cell cycle S-phase progression and create a favorable environment allowing efficient viral genome replication. Participates later in the secondary envelopment of capsids. Indeed, plays a linker role for the association of the outer viral tegument to the capsids together with the inner tegument protein. The polypeptide is Large tegument protein deneddylase (U31) (Homo sapiens (Human)).